Consider the following 197-residue polypeptide: Glycerol-3-phosphate acyltransferase (197 aa).

Transmembrane regions (helical) follow at residues 2 to 22 (LDVI…AIVV), 53 to 73 (AGIT…LAWL), 78 to 98 (PVVA…PVYF), 112 to 132 (VILA…LAVA), and 152 to 174 (YMLW…AAIV).

Belongs to the PlsY family. Probably interacts with PlsX.

The protein resides in the cell inner membrane. The catalysed reaction is an acyl phosphate + sn-glycerol 3-phosphate = a 1-acyl-sn-glycero-3-phosphate + phosphate. It functions in the pathway lipid metabolism; phospholipid metabolism. Functionally, catalyzes the transfer of an acyl group from acyl-phosphate (acyl-PO(4)) to glycerol-3-phosphate (G3P) to form lysophosphatidic acid (LPA). This enzyme utilizes acyl-phosphate as fatty acyl donor, but not acyl-CoA or acyl-ACP. The sequence is that of Glycerol-3-phosphate acyltransferase from Halorhodospira halophila (strain DSM 244 / SL1) (Ectothiorhodospira halophila (strain DSM 244 / SL1)).